The chain runs to 107 residues: RecQ-mediated genome instability protein 2 homolog (107 aa).

It belongs to the RMI2 family. In terms of assembly, component of the RMI complex, containing at least top-3, rmh-1 and rmh-2. Component of the BTR double Holliday Junction dissolution complex composed of at least him-6, top-3, rmh-1 and rmif-2, which is involved in double strand break repair in the germline. Interacts with rmh-1; the interaction is direct and is required for mutual stability and localization at nuclear foci. As to expression, expressed in the germline.

It localises to the nucleus. In terms of biological role, essential component of the RMI complex, a complex that plays an important role in the processing of homologous recombination intermediates. Component of the BTR double Holliday Junction dissolution complex, which is involved in homologous recombination during meiotic double strand break in the germline. Plays a role in double strand break repair by positively regulating the accumulation of rad-51 at double strand breaks. Stabilizes and positively regulates the localization of the BTR double Holliday Junction dissolution complex components rmh-1, him-6 and top-3 at nuclear foci during meiotic recombination. Positively regulates meiotic recombination, chiasma formation, and chromosome segregation in meiosis. Positively regulates DNA crossover formation and positioning on chromosome arms (away from the chromosome center) during homologous recombination. This Caenorhabditis elegans protein is RecQ-mediated genome instability protein 2 homolog.